A 521-amino-acid polypeptide reads, in one-letter code: Exoglucanase 1 (521 aa).

Residues 1-17 (MLAKFAALAALVASANA) form the signal peptide. The interval 18–450 (QAVCSLTAET…FGPIGSTFSG (433 aa)) is catalytic. N32 is a glycosylation site (N-linked (GlcNAc...) asparagine). E229 functions as the Nucleophile in the catalytic mechanism. The Proton donor role is filled by E234. N287 carries N-linked (GlcNAc...) asparagine glycosylation. Residues 447–486 (TFSGGSSGTPPSNPSSSVKPVTSTAKPSSTSTASNPSGTG) are disordered. The tract at residues 451-485 (GSSGTPPSNPSSSVKPVTSTAKPSSTSTASNPSGT) is linker. Residues 485–521 (TGAAHWAQCGGIGFSGPTTCQSPYTCQKINDYYSQCV) form the CBM1 domain. 2 disulfides stabilise this stretch: C493-C510 and C504-C520.

This sequence belongs to the glycosyl hydrolase 7 (cellulase C) family.

The protein resides in the secreted. It carries out the reaction Hydrolysis of (1-&gt;4)-beta-D-glucosidic linkages in cellulose and cellotetraose, releasing cellobiose from the non-reducing ends of the chains.. This Neurospora crassa (strain ATCC 24698 / 74-OR23-1A / CBS 708.71 / DSM 1257 / FGSC 987) protein is Exoglucanase 1 (cbh-1).